Consider the following 60-residue polypeptide: Cytotoxin SP15d (60 aa).

Disulfide bonds link Cys3–Cys21, Cys14–Cys38, Cys42–Cys53, and Cys54–Cys59.

It belongs to the three-finger toxin family. Short-chain subfamily. Type IA cytotoxin sub-subfamily. In terms of assembly, monomer in solution; Homodimer and oligomer in the presence of negatively charged lipids forming a pore with a size ranging between 20 and 30 Angstroms. In terms of tissue distribution, expressed by the venom gland.

The protein resides in the secreted. The protein localises to the target cell membrane. Its function is as follows. Shows cytolytic activity on many different cells by forming pore in lipid membranes. In vivo, increases heart rate or kills the animal by cardiac arrest. In addition, it binds to heparin with high affinity, interacts with Kv channel-interacting protein 1 (KCNIP1) in a calcium-independent manner, and binds to integrin alpha-V/beta-3 (ITGAV/ITGB3) with moderate affinity. The protein is Cytotoxin SP15d of Naja atra (Chinese cobra).